We begin with the raw amino-acid sequence, 306 residues long: Abnormal cell migration protein 21 (306 aa).

TSP type-1 domains lie at Pro55 to Ser102 and Phe109 to Pro155. Trp58 and Trp61 each carry a C-linked (Man) tryptophan glycan. Disulfide bonds link Cys121/Cys149, Cys123/Cys154, and Cys134/Cys139. Residues Cys240–Leu260 form a helical membrane-spanning segment.

Glycosylated via C-mannosylation by dpy-19 at Trp-58 and Trp-61.

Its subcellular location is the membrane. In terms of biological role, required for determination of left/right asymmetry in nervous system. Acts together with unc-40 to control an initial left-right asymmetric polarization of the Q neuroblasts. Mig-21 and unc-40 may control the asymmetry in Wnt signaling response by restricting posterior polarization to one of the 2 Q neuroblasts. Involved in left-side QL posterior migration. In right-side QR, unc-40 and mig-21 pathways mutually inhibit each other in posterior migration, allowing anterior QR migration. This chain is Abnormal cell migration protein 21 (mig-21), found in Caenorhabditis elegans.